Reading from the N-terminus, the 364-residue chain is Polygalacturonase (364 aa).

The first 21 residues, 1–21 (MVAYALTSMLLSAGALVAAAP), serve as a signal peptide directing secretion. A propeptide spanning residues 22 to 27 (SGLDAR) is cleaved from the precursor. The cysteines at positions 30 and 45 are disulfide-linked. PbH1 repeat units follow at residues 158 to 188 (VTGL…DIGS), 189 to 210 (SSGI…AINS), 211 to 231 (GSDI…SIGS), 240 to 261 (VKGV…RIKT), 269 to 291 (VSDI…VIEQ), and 303 to 348 (TTGV…SITG). The Proton donor role is filled by Asp203. Cys205 and Cys221 form a disulfide bridge. His225 is an active-site residue. The N-linked (GlcNAc...) asparagine glycan is linked to Asn276. A disulfide bridge links Cys331 with Cys336. Asn340 carries an N-linked (GlcNAc...) asparagine glycan. A disulfide bridge connects residues Cys355 and Cys364.

Belongs to the glycosyl hydrolase 28 family.

The protein resides in the secreted. It catalyses the reaction (1,4-alpha-D-galacturonosyl)n+m + H2O = (1,4-alpha-D-galacturonosyl)n + (1,4-alpha-D-galacturonosyl)m.. In terms of biological role, involved in maceration and soft-rotting of plant tissue. Hydrolyzes the 1,4-alpha glycosidic bonds of de-esterified pectate in the smooth region of the plant cell wall. The chain is Polygalacturonase (PGN1) from Cochliobolus carbonum (Maize leaf spot fungus).